We begin with the raw amino-acid sequence, 400 residues long: MNYDHILIRYGEMALKGKNIKQFIIKLQENIQQKIKHFEGVKVKRTQGRMFVLLNGNEPEPIIEKLKNVFGIHSLSIAIRVENTEEQIKEGALYALKREANAKTFKVTVKRISKDFPIPSQQMNQILGGHLLANTNDITVNVHEPDVEVRVEIRKEATYITSGTIRCRGGLPVGTSGKSLLLLSGGIDSPVAGFLAMKRGVQLEAIHFHSPPFTSERAKQKVLDLTQTLTKYGKSIKVHIVPFTKLQQEIFREMPNDYAMTIMRRMMFRISERICEQEEILSLTTGENLGQVASQTMQSMHTINEVTNYPIIRPLISMDKQEVIEVSQEIGTYETSIQPYEDCCTIFVPKSPKTKPKREKVNYYESHHDFTPTMEETINGIETVKITDKTVIDQSFKDLL.

The THUMP domain occupies 60 to 164 (EPIIEKLKNV…KEATYITSGT (105 aa)). ATP contacts are provided by residues 182–183 (LL), 207–208 (HF), Arg-264, Gly-286, and Gln-295.

This sequence belongs to the ThiI family.

The protein localises to the cytoplasm. It carries out the reaction [ThiI sulfur-carrier protein]-S-sulfanyl-L-cysteine + a uridine in tRNA + 2 reduced [2Fe-2S]-[ferredoxin] + ATP + H(+) = [ThiI sulfur-carrier protein]-L-cysteine + a 4-thiouridine in tRNA + 2 oxidized [2Fe-2S]-[ferredoxin] + AMP + diphosphate. The catalysed reaction is [ThiS sulfur-carrier protein]-C-terminal Gly-Gly-AMP + S-sulfanyl-L-cysteinyl-[cysteine desulfurase] + AH2 = [ThiS sulfur-carrier protein]-C-terminal-Gly-aminoethanethioate + L-cysteinyl-[cysteine desulfurase] + A + AMP + 2 H(+). The protein operates within cofactor biosynthesis; thiamine diphosphate biosynthesis. Catalyzes the ATP-dependent transfer of a sulfur to tRNA to produce 4-thiouridine in position 8 of tRNAs, which functions as a near-UV photosensor. Also catalyzes the transfer of sulfur to the sulfur carrier protein ThiS, forming ThiS-thiocarboxylate. This is a step in the synthesis of thiazole, in the thiamine biosynthesis pathway. The sulfur is donated as persulfide by IscS. The sequence is that of Probable tRNA sulfurtransferase from Oceanobacillus iheyensis (strain DSM 14371 / CIP 107618 / JCM 11309 / KCTC 3954 / HTE831).